The following is a 244-amino-acid chain: 5-oxoprolinase subunit A (244 aa).

This sequence belongs to the LamB/PxpA family. As to quaternary structure, forms a complex composed of PxpA, PxpB and PxpC.

It catalyses the reaction 5-oxo-L-proline + ATP + 2 H2O = L-glutamate + ADP + phosphate + H(+). Its function is as follows. Catalyzes the cleavage of 5-oxoproline to form L-glutamate coupled to the hydrolysis of ATP to ADP and inorganic phosphate. The protein is 5-oxoprolinase subunit A of Escherichia coli O139:H28 (strain E24377A / ETEC).